We begin with the raw amino-acid sequence, 450 residues long: UDP-N-acetylmuramoylalanine--D-glutamate ligase (450 aa).

Residue 116–122 coordinates ATP; that stretch reads GSNGKTT.

This sequence belongs to the MurCDEF family.

It is found in the cytoplasm. The catalysed reaction is UDP-N-acetyl-alpha-D-muramoyl-L-alanine + D-glutamate + ATP = UDP-N-acetyl-alpha-D-muramoyl-L-alanyl-D-glutamate + ADP + phosphate + H(+). It participates in cell wall biogenesis; peptidoglycan biosynthesis. Its function is as follows. Cell wall formation. Catalyzes the addition of glutamate to the nucleotide precursor UDP-N-acetylmuramoyl-L-alanine (UMA). The chain is UDP-N-acetylmuramoylalanine--D-glutamate ligase from Dechloromonas aromatica (strain RCB).